Here is a 342-residue protein sequence, read N- to C-terminus: Foldase protein PrsA (342 aa).

Positions 1–22 (MVSVKKIVASALVGVLMFSAVG) are cleaved as a signal peptide. Residue C23 is the site of N-palmitoyl cysteine attachment. The S-diacylglycerol cysteine moiety is linked to residue C23. The region spanning 189-284 (DSGVLTKHLL…FGYHIIQAGA (96 aa)) is the PpiC domain.

The protein belongs to the PrsA family.

Its subcellular location is the cell membrane. It catalyses the reaction [protein]-peptidylproline (omega=180) = [protein]-peptidylproline (omega=0). Functionally, plays a major role in protein secretion by helping the post-translocational extracellular folding of several secreted proteins. This chain is Foldase protein PrsA, found in Clostridium perfringens (strain 13 / Type A).